The following is a 570-amino-acid chain: Molecular chaperone MKKS (570 aa).

192–199 (ERMVLGKS) contributes to the ATP binding site. The interval 198–370 (KSIIVPLKGQ…FHLLPNEATV (173 aa)) is substrate-binding apical domain.

The protein belongs to the TCP-1 chaperonin family. In terms of assembly, component of a complex composed at least of MKKS, BBS10, BBS12, TCP1, CCT2, CCT3, CCT4, CCT5 and CCT8. Interacts with STUB1. Interacts with BBS2 (via coiled coil domain). Interacts with CCDC28B. Interacts with BBS12. Interacts with SMARCC1, a component of the SWI/SNF complexes; the interaction takes place predominantly in the cytoplasm and may modulate SMARCC1 location. Interacts with DLEC1. Widely expressed in adult and fetal tissues. Expressed in the developing heart, brain retina, limb buds, as well as in the developing neural tube. Expressed in the embryo in the first and second branchial arches. Expressed in parafin embedded tissue sections of brain, kidney, retina, olfactory epithelium and the ependymal layer of ventricles. Detected only in restricted regions of these tissue sections, including the ciliated border of renal tubules, the connecting cilium and the inner and outer nuclear layers of retina, and the ciliated layer of olfactory epithelia.

It is found in the cytoplasm. The protein resides in the cytoskeleton. Its subcellular location is the microtubule organizing center. It localises to the centrosome. The protein localises to the cytosol. It is found in the nucleus. Functionally, probable molecular chaperone that assists the folding of proteins upon ATP hydrolysis. Plays a role in the assembly of BBSome, a complex involved in ciliogenesis regulating transports vesicles to the cilia. May play a role in protein processing in limb, cardiac and reproductive system development. May play a role in cytokinesis. The sequence is that of Molecular chaperone MKKS (Mkks) from Mus musculus (Mouse).